We begin with the raw amino-acid sequence, 912 residues long: LPS-assembly protein LptD (912 aa).

Residues 1–27 (MLYSPLYQSIRLILFGALGLSSLTVSA) form the signal peptide.

It belongs to the LptD family. In terms of assembly, component of the lipopolysaccharide transport and assembly complex. Interacts with LptE and LptA.

It localises to the cell outer membrane. Its function is as follows. Together with LptE, is involved in the assembly of lipopolysaccharide (LPS) at the surface of the outer membrane. The chain is LPS-assembly protein LptD from Psychrobacter arcticus (strain DSM 17307 / VKM B-2377 / 273-4).